The chain runs to 158 residues: Lectin-like protein EP153R (158 aa).

At 1–26 (MFLNKKYPSLIEKKMDDLMTLKFCYL) the chain is on the cytoplasmic side. The helical transmembrane segment at 27–47 (IITFLIITNIFSLAINIWGGG) threads the bilayer. The Extracellular segment spans residues 48–158 (DMIDRQSCEN…YTETFFICSN (111 aa)). Residues cysteine 61 and cysteine 72 are joined by a disulfide bond. The interval 61–157 (CPKDWVGYNN…KYTETFFICS (97 aa)) is lectin-like. 7 N-linked (GlcNAc...) asparagine; by host glycosylation sites follow: asparagine 81, asparagine 94, asparagine 100, asparagine 106, asparagine 112, asparagine 119, and asparagine 139.

The protein belongs to the asfivirus lectin-like protein family. In terms of assembly, homodimer.

The protein resides in the host endoplasmic reticulum membrane. In terms of biological role, down-regulates MHC-I expression by impairing the appropriate configuration or presentation into the plasma membrane of the latter. Participates in viral hemadsorption, which may help viral spread. Reduces the transactivating activity of host TP53, thus inhibiting apoptosis. Non-essential for virus growth in swine macrophage cell cultures. The polypeptide is Lectin-like protein EP153R (African swine fever virus (isolate Pig/Kenya/KEN-50/1950) (ASFV)).